The sequence spans 203 residues: Phospho-2-dehydro-3-deoxyheptonate aldolase (203 aa).

Residues 1–10 (MIDRLVRDSR) show a composition bias toward basic and acidic residues. The segment at 1 to 28 (MIDRLVRDSRGPVTERNPPHMSLSAGPA) is disordered.

The protein belongs to the class-I DAHP synthase family.

The catalysed reaction is D-erythrose 4-phosphate + phosphoenolpyruvate + H2O = 7-phospho-2-dehydro-3-deoxy-D-arabino-heptonate + phosphate. Its pathway is metabolic intermediate biosynthesis; chorismate biosynthesis; chorismate from D-erythrose 4-phosphate and phosphoenolpyruvate: step 1/7. Functionally, stereospecific condensation of phosphoenolpyruvate (PEP) and D-erythrose-4-phosphate (E4P) giving rise to 3-deoxy-D-arabino-heptulosonate-7-phosphate (DAHP). This chain is Phospho-2-dehydro-3-deoxyheptonate aldolase (aroA), found in Amycolatopsis methanolica.